Reading from the N-terminus, the 509-residue chain is Protein disulfide-isomerase (509 aa).

Residues 1-19 (MLSRALLCLALAWAARVGA) form the signal peptide. The Thioredoxin 1 domain occupies 20-136 (DALEEEDNVL…IVNWLKKRTG (117 aa)). Residues Cys-55 and Cys-58 each act as nucleophile in the active site. Cys-55 and Cys-58 form a disulfide bridge. Lys-202 bears the N6-acetyllysine mark. 2 positions are modified to N6-succinyllysine: Lys-224 and Lys-273. Phosphoserine is present on residues Ser-333 and Ser-359. A Thioredoxin 2 domain is found at 335–477 (ELTAEKITQF…FKKFLESGGQ (143 aa)). Residues Cys-399 and Cys-402 each act as nucleophile in the active site. An intrachain disulfide couples Cys-399 to Cys-402. Residue Ser-429 is modified to Phosphoserine. The Prevents secretion from ER motif lies at 506–509 (KDEL).

Belongs to the protein disulfide isomerase family. Heterodimer; heterodimerizes with the protein microsomal triglyceride transfer MTTP. Homodimer. Monomers and homotetramers may also occur. Interacts with P4HA2, forming a heterotetramer consisting of 2 alpha subunits (P4HA2) and 2 beta (P4HB), where P4HB plays the role of a structural subunit; this tetramer catalyzes the formation of 4-hydroxyproline in collagen. Also constitutes the structural subunit of the microsomal triacylglycerol transfer protein MTTP in mammalian cells. Stabilizes both enzymes and retain them in the ER without contributing to the catalytic activity. Binds UBQLN1. Interacts with ERO1B. Interacts with ILDR2. Interacts with ERN1/IRE1A (via N-terminus); the interaction is enhanced by phosphorylation of P4HB by FAM20C in response to endoplasmic reticulum stress and results in attenuation of ERN1 activity. Post-translationally, phosphorylation of Ser-359 by FAM20C is induced by endoplasmic reticulum stress and results in a functional switch from oxidoreductase to molecular chaperone. It also promotes interaction with ERN1.

It localises to the endoplasmic reticulum. Its subcellular location is the endoplasmic reticulum lumen. The protein resides in the melanosome. The protein localises to the cell membrane. The enzyme catalyses Catalyzes the rearrangement of -S-S- bonds in proteins.. This multifunctional protein catalyzes the formation, breakage and rearrangement of disulfide bonds. At the cell surface, seems to act as a reductase that cleaves disulfide bonds of proteins attached to the cell. May therefore cause structural modifications of exofacial proteins. Inside the cell, seems to form/rearrange disulfide bonds of nascent proteins. At high concentrations and following phosphorylation by FAM20C, functions as a chaperone that inhibits aggregation of misfolded proteins. At low concentrations, facilitates aggregation (anti-chaperone activity). May be involved with other chaperones in the structural modification of the TG precursor in hormone biogenesis. Also acts as a structural subunit of various enzymes such as prolyl 4-hydroxylase and microsomal triacylglycerol transfer protein MTTP. Receptor for LGALS9; the interaction retains P4HB at the cell surface of Th2 T helper cells, increasing disulfide reductase activity at the plasma membrane, altering the plasma membrane redox state and enhancing cell migration. This chain is Protein disulfide-isomerase (P4hb), found in Rattus norvegicus (Rat).